A 104-amino-acid chain; its full sequence is DNA-directed RNA polymerase subunit Rpo13 (104 aa).

2 disordered regions span residues 1–33 (MVSG…EDEF) and 78–104 (RDSR…SVEG). The span at 7–31 (TDEEKEGTSDEEVNEEKEVEETSED) shows a compositional bias: acidic residues. A compositionally biased stretch (basic residues) spans 80-104 (SRRKAKKAVSKKVKKTKKKEKSVEG).

It belongs to the archaeal Rpo13 RNA polymerase subunit family. Part of the 13-subunit RNA polymerase complex.

The protein localises to the cytoplasm. It carries out the reaction RNA(n) + a ribonucleoside 5'-triphosphate = RNA(n+1) + diphosphate. Its function is as follows. DNA-dependent RNA polymerase (RNAP) catalyzes the transcription of DNA into RNA using the four ribonucleoside triphosphates as substrates. Probably binds dsDNA. This chain is DNA-directed RNA polymerase subunit Rpo13, found in Saccharolobus solfataricus (strain ATCC 35092 / DSM 1617 / JCM 11322 / P2) (Sulfolobus solfataricus).